We begin with the raw amino-acid sequence, 364 residues long: Chorismate synthase (364 aa).

2 residues coordinate NADP(+): Arg-48 and Arg-54. FMN is bound by residues 125–127 (RSS), Gly-282, 297–301 (KPPAS), and Arg-323.

This sequence belongs to the chorismate synthase family. As to quaternary structure, homotetramer. FMNH2 serves as cofactor.

It catalyses the reaction 5-O-(1-carboxyvinyl)-3-phosphoshikimate = chorismate + phosphate. It participates in metabolic intermediate biosynthesis; chorismate biosynthesis; chorismate from D-erythrose 4-phosphate and phosphoenolpyruvate: step 7/7. In terms of biological role, catalyzes the anti-1,4-elimination of the C-3 phosphate and the C-6 proR hydrogen from 5-enolpyruvylshikimate-3-phosphate (EPSP) to yield chorismate, which is the branch point compound that serves as the starting substrate for the three terminal pathways of aromatic amino acid biosynthesis. This reaction introduces a second double bond into the aromatic ring system. The polypeptide is Chorismate synthase (Chloroflexus aurantiacus (strain ATCC 29366 / DSM 635 / J-10-fl)).